The following is a 453-amino-acid chain: Gamma-glutamylpolyamine synthetase GlnA2 (453 aa).

The GS beta-grasp domain occupies arginine 15 to glycine 100. Residues proline 107 to leucine 453 enclose the GS catalytic domain. Mg(2+)-binding residues include glutamate 130 and glutamate 132. Glutamate 182 is a binding site for ATP. Positions 187 and 194 each coordinate Mg(2+). Position 239 (glycine 239) interacts with L-glutamate. Histidine 243 contributes to the Mg(2+) binding site. Position 245–247 (histidine 245–serine 247) interacts with ATP. Residues arginine 296, glutamate 310, and arginine 322 each coordinate L-glutamate. Arginine 322 and arginine 327 together coordinate ATP. Glutamate 342 is a Mg(2+) binding site. Residue arginine 344 coordinates L-glutamate.

The protein belongs to the glutamine synthetase family. The cofactor is Mg(2+).

It carries out the reaction putrescine + L-glutamate + ATP = gamma-L-glutamylputrescine + ADP + phosphate + H(+). It catalyses the reaction spermine + L-glutamate + ATP = gamma-L-glutamylspermine + ADP + phosphate + H(+). The enzyme catalyses spermidine + L-glutamate + ATP = gamma-L-glutamylspermidine + ADP + phosphate + H(+). The catalysed reaction is cadaverine + L-glutamate + ATP = gamma-L-glutamylcadaverine + ADP + phosphate + H(+). It participates in amine and polyamine degradation; putrescine degradation. The protein operates within amine and polyamine degradation; spermidine degradation. Its pathway is amine and polyamine degradation; spermine degradation. No effect on activity with glutamine synthetase (GS) inhibitor methionine sulfoximine (MSO). In terms of biological role, involved in the catabolism of polyamines. Catalyzes the ATP-dependent gamma-glutamylation of polyamines. Substrates include putrescine, cadaverine, spermidine and spermine, with a preference for short-chain polyamine putrescine. No complementation of the L-glutamine auxotrophy of an E.coli glnA mutant. Together with GlnA3, enables survival of S.coelicolor under exposure to high local environmental polyamine concentrations, which is toxic to the cells. The polypeptide is Gamma-glutamylpolyamine synthetase GlnA2 (Streptomyces coelicolor (strain ATCC BAA-471 / A3(2) / M145)).